Here is a 785-residue protein sequence, read N- to C-terminus: Putative endonuclease MutS2 (785 aa).

335–342 is a binding site for ATP; sequence GPNTGGKT. The stretch at 513-586 forms a coiled coil; it reads TAEHNEVDTM…AEKVKAAMKE (74 aa). Residues 636–785 are partially complements a deletion for mitomycin C (MMC) resistance and for chromosomal DNA transformation; it reads KRDFKPGDEV…GSGVTVVELK (150 aa). The KOW region stretch occupies residues 641–681; it reads PGDEVKVLTFGQKGTLLEKTGGNEWNVQIGILKMKVKEKDL. One can recognise a Smr domain in the interval 710–785; sequence LDLRGERYEN…GSGVTVVELK (76 aa).

This sequence belongs to the DNA mismatch repair MutS family. MutS2 subfamily. In terms of assembly, binds to ribosomes as a homodimer. Binds to stalled/collided disomes, association is greater in (ribosome-targeted) antibiotic-treated cells (with increased stalling at specific mRNA sites). The clamp domain of one monomer binds the A-site finger, the 23S rRNA of the central protuberance and ribosomal protein uL5 of the leading (stalled) ribosome, while the other monomer binds in a gap between the ribosomal central protuberance and the L1 stalk of the leading ribosome.

The protein localises to the cytoplasm. In terms of biological role, acts as a ribosome collision sensor splitting the ribosome into its 2 subunits. Detects stalled/collided disomes (pairs of ribosomes where the leading ribosome is stalled and a second ribosome has collided with it) which it binds and splits, by an ATP-hydrolysis driven conformational change. Does not seem to have endoribonuclease activity (in the context of ribosome stalling). Acts upstream of the ribosome quality control system (RQC), a ribosome-associated complex that mediates the extraction of incompletely synthesized nascent chains from stalled ribosomes and their subsequent degradation, probably generates substrates for RQC. Does not seem to be involved in mismatch repair or in the prevention of interspecific recombination during DNA transformation. Might be involved in homologous recombination. Putative endonuclease that may be involved in the suppression of homologous recombination and may therefore have a key role in the control of bacterial genetic diversity. This Bacillus subtilis (strain 168) protein is Putative endonuclease MutS2.